The following is a 97-amino-acid chain: Essential MCU regulator, mitochondrial (97 aa).

Residues 1–37 (MAARMGVLSVAGFRAAARAGGLLARPKQSTAVVPCRT) constitute a mitochondrion transit peptide. Topologically, residues 38–55 (VIASSAGAILPKPEKVSF) are mitochondrial matrix. A helical transmembrane segment spans residues 56-75 (GLLRVFTVVIPFLYIGTLIS). Over 76 to 97 (KNFAAVLEEHDIFVPEDDDDDD) the chain is Mitochondrial intermembrane.

Belongs to the SMDT1/EMRE family. As to quaternary structure, component of the uniplex complex.

It is found in the mitochondrion inner membrane. Essential regulatory subunit of the mitochondrial calcium uniporter complex (uniplex), a complex that mediates calcium uptake into mitochondria. Required to bridge the calcium-sensing proteins micu1 with the calcium-conducting subunit mcu. Acts by mediating activation of mcu and retention of micu1 to the mcu pore, in order to ensure tight regulation of the uniplex complex and appropriate responses to intracellular calcium signaling. The chain is Essential MCU regulator, mitochondrial from Xenopus laevis (African clawed frog).